The primary structure comprises 364 residues: tRNA-specific 2-thiouridylase MnmA 2 (364 aa).

Residues 10 to 17 (GMSGGVDS) and M36 each bind ATP. C106 functions as the Nucleophile in the catalytic mechanism. Residues C106 and C204 are joined by a disulfide bond. G130 is an ATP binding site. Residues 154-156 (KDQ) form an interaction with tRNA region. Catalysis depends on C204, which acts as the Cysteine persulfide intermediate. The tract at residues 310 to 311 (RY) is interaction with tRNA.

This sequence belongs to the MnmA/TRMU family.

Its subcellular location is the cytoplasm. The catalysed reaction is S-sulfanyl-L-cysteinyl-[protein] + uridine(34) in tRNA + AH2 + ATP = 2-thiouridine(34) in tRNA + L-cysteinyl-[protein] + A + AMP + diphosphate + H(+). Functionally, catalyzes the 2-thiolation of uridine at the wobble position (U34) of tRNA, leading to the formation of s(2)U34. The chain is tRNA-specific 2-thiouridylase MnmA 2 from Caldanaerobacter subterraneus subsp. tengcongensis (strain DSM 15242 / JCM 11007 / NBRC 100824 / MB4) (Thermoanaerobacter tengcongensis).